Consider the following 957-residue polypeptide: MSAGFVQRHLGPSPAEQAQMLQRLGCRDLEQLLQECVPAEILIDADQARDALPQECDERQALRELEQRAAANTVLRNLIGLGYYDTATPALIQRHVLENPAWYTAYTPYQAEIAQGRLEALLNFQTLISELTGLPIANASLLDEATAAAEAMTLAYGACRLKQARRFHVQADLFPQTLAVLQTRAEPLGIELVVADPAAMDFGDDSFGLLLQLPTASGACPDPTEVIARAKAADVLVIAAVDPLAQVLMPPVAQLGVQIAVGSAQRFGVPLGFGGPHAAFFATTEAYKRQIPGRLVGMSRDAAGEPALRLALQTREQHIRRDKATSNICTAQVLLAVMAGFYAVHHGPDGLTAIARRVQRLTAALAAGLQQLGLDVAAAPAFDTLRLRLDQPNGWIERLEAAGFNLLPLPDGAGISLDECSDEAEVQALLECFAAGCGRTAPAISELLAATPQAKSVGELPVRPAGWLPQAVFQLYRSETELLRYIQRLVSKDFSLVHGMIPLGSCTMKLNAAAELQPVSWAAFNRLHPFVPAAQRQGYDQLINELEAWLATITGFAAVSLQPNAGSQGEYAGLLVIRAWHRQRGEGHRNICLIPTSAHGTNPASAVMAGMQVVAVQCDEAGNIDQADLAAKAEQHADQLAALMVTYPSTHGVFEQGISDICALIHRHGGQVYLDGANLNAQVGVCQPGRFGADVCHLNLHKTFCIPHGGGGPGVGPIAVAAHLAPFLPGHPLVPCGGEQAIGPVSAAPWGSASILPISWMYIRLMGGAGLRQATAVALLAANDLAERLEPHFPVLYRGANGRVAHECILDLRPLKRSAGLEVDDLAKRLMDYGFHAPTVSWPVAGTVMVEPTESESLLELDRFVEAMMAIRAEAAAIEAGLCDRDDNPLRRAPHTLAAVTADVWERPYSREQAAYPVQGLRSNKLWPAVSRIDNAFGDRNLICTCPSVEELARAAG.

Lys702 bears the N6-(pyridoxal phosphate)lysine mark.

This sequence belongs to the GcvP family. As to quaternary structure, the glycine cleavage system is composed of four proteins: P, T, L and H. Pyridoxal 5'-phosphate serves as cofactor.

It carries out the reaction N(6)-[(R)-lipoyl]-L-lysyl-[glycine-cleavage complex H protein] + glycine + H(+) = N(6)-[(R)-S(8)-aminomethyldihydrolipoyl]-L-lysyl-[glycine-cleavage complex H protein] + CO2. Its function is as follows. The glycine cleavage system catalyzes the degradation of glycine. The P protein binds the alpha-amino group of glycine through its pyridoxal phosphate cofactor; CO(2) is released and the remaining methylamine moiety is then transferred to the lipoamide cofactor of the H protein. The chain is Glycine dehydrogenase (decarboxylating) from Synechococcus sp. (strain RCC307).